The sequence spans 336 residues: Tryptophan--tRNA ligase (336 aa).

Residues 13 to 15 (QPS) and 21 to 22 (GN) contribute to the ATP site. Positions 14 to 22 (PSGNLTIGN) match the 'HIGH' region motif. D140 serves as a coordination point for L-tryptophan. Residues 152–154 (GQD), I191, and 200–204 (KMSKS) each bind ATP. A 'KMSKS' region motif is present at residues 200–204 (KMSKS).

Belongs to the class-I aminoacyl-tRNA synthetase family. As to quaternary structure, homodimer.

Its subcellular location is the cytoplasm. The enzyme catalyses tRNA(Trp) + L-tryptophan + ATP = L-tryptophyl-tRNA(Trp) + AMP + diphosphate + H(+). Catalyzes the attachment of tryptophan to tRNA(Trp). In Buchnera aphidicola subsp. Schizaphis graminum (strain Sg), this protein is Tryptophan--tRNA ligase.